We begin with the raw amino-acid sequence, 555 residues long: Glypican-6 (555 aa).

Positions 1-23 (MPSWIGAVILPLLGLLLSLPAGA) are cleaved as a signal peptide. Residues 348-357 (PALRSARSAP) are compositionally biased toward low complexity. A disordered region spans residues 348–376 (PALRSARSAPENFNTRFRPYNPEERPTTA). Residue S529 is the site of GPI-anchor amidated serine attachment. A propeptide spans 530-555 (SAAQRGHSLLSWSLTCIVLALQRLCR) (removed in mature form).

The protein belongs to the glypican family.

It localises to the cell membrane. It is found in the secreted. The protein resides in the extracellular space. Cell surface proteoglycan that bears heparan sulfate. Putative cell surface coreceptor for growth factors, extracellular matrix proteins, proteases and anti-proteases. Enhances migration and invasion of cancer cells through WNT5A signaling. This Pongo abelii (Sumatran orangutan) protein is Glypican-6 (GPC6).